We begin with the raw amino-acid sequence, 240 residues long: Cytochrome c-551 (240 aa).

C41, C44, H45, C128, C132, and H133 together coordinate heme c.

Binds 2 heme c groups per subunit.

This chain is Cytochrome c-551, found in Rhodocyclus tenuis (Rhodospirillum tenue).